The primary structure comprises 221 residues: Zingipain-2 (221 aa).

2 disulfide bridges follow: cysteine 24–cysteine 65 and cysteine 58–cysteine 98. Cysteine 27 is a catalytic residue. N-linked (GlcNAc...) asparagine glycans are attached at residues asparagine 99 and asparagine 156. A disulfide bond links cysteine 155 and cysteine 206. Histidine 161 is a catalytic residue.

It belongs to the peptidase C1 family.

It catalyses the reaction Preferential cleavage of peptides with a proline residue at the P2 position.. Its function is as follows. Cysteine proteinase with a specific activity toward peptides with a proline residue at the P2 position. The protein is Zingipain-2 of Zingiber officinale (Ginger).